Here is a 468-residue protein sequence, read N- to C-terminus: Glutamate--tRNA ligase (468 aa).

The 'HIGH' region motif lies at 11–21; that stretch reads PSPTGFIHLGN. A 'KMSKS' region motif is present at residues 243–247; that stretch reads KMSKR. Lysine 246 provides a ligand contact to ATP.

The protein belongs to the class-I aminoacyl-tRNA synthetase family. Glutamate--tRNA ligase type 1 subfamily. As to quaternary structure, monomer.

It is found in the cytoplasm. It carries out the reaction tRNA(Glu) + L-glutamate + ATP = L-glutamyl-tRNA(Glu) + AMP + diphosphate. Its function is as follows. Catalyzes the attachment of glutamate to tRNA(Glu) in a two-step reaction: glutamate is first activated by ATP to form Glu-AMP and then transferred to the acceptor end of tRNA(Glu). The sequence is that of Glutamate--tRNA ligase from Cupriavidus pinatubonensis (strain JMP 134 / LMG 1197) (Cupriavidus necator (strain JMP 134)).